A 433-amino-acid polypeptide reads, in one-letter code: Citrate synthase, mitochondrial (433 aa).

Active-site residues include His-274 and His-320. Residue Arg-329 participates in oxaloacetate binding. Asp-375 is an active-site residue. The oxaloacetate site is built by Arg-401 and Arg-421.

It belongs to the citrate synthase family. Homodimer.

Its subcellular location is the mitochondrion matrix. The catalysed reaction is oxaloacetate + acetyl-CoA + H2O = citrate + CoA + H(+). The protein operates within carbohydrate metabolism; tricarboxylic acid cycle; isocitrate from oxaloacetate: step 1/2. Key enzyme of the Krebs tricarboxylic acid cycle which catalyzes the synthesis of citrate from acetyl coenzyme A and oxaloacetate. In Gallus gallus (Chicken), this protein is Citrate synthase, mitochondrial (CS).